Consider the following 134-residue polypeptide: Acyl carrier protein, mitochondrial (134 aa).

Residues 1–46 constitute a mitochondrion transit peptide; sequence MFRTAALTAARVARPAVASAVRAGVARPAFVQAVPKVAAFQAVRFY. Residues 55–131 enclose the Carrier domain; that stretch reads DEVFSRIAQV…KAVEYILSQP (77 aa). Ser-91 carries the O-(pantetheine 4'-phosphoryl)serine modification.

The protein belongs to the acyl carrier protein (ACP) family. As to quaternary structure, complex I is composed of about 30 different subunits. In terms of processing, 4'-phosphopantetheine is transferred from CoA to a specific serine of apo-ACP by acpS. This modification is essential for activity because fatty acids are bound in thioester linkage to the sulfhydryl of the prosthetic group.

Its subcellular location is the mitochondrion. Its pathway is lipid metabolism; fatty acid biosynthesis. Its function is as follows. Carrier of the growing fatty acid chain in fatty acid biosynthesis. May be involved in the synthesis of very-long-chain fatty acids. Accessory and non-catalytic subunit of the mitochondrial membrane respiratory chain NADH dehydrogenase (Complex I), which functions in the transfer of electrons from NADH to the respiratory chain. The protein is Acyl carrier protein, mitochondrial (nuo-12) of Neurospora crassa (strain ATCC 24698 / 74-OR23-1A / CBS 708.71 / DSM 1257 / FGSC 987).